A 471-amino-acid chain; its full sequence is WASH complex subunit 1 (471 aa).

The required for WASH complex assembly stretch occupies residues 1–54; that stretch reads MTPTGTQHSLAGQTYAVPLIQPDLRREEAIQQVADALQYLQKVSGDIFSRISQR. The interval 1-167 is WHD1; that stretch reads MTPTGTQHSL…EGLGGLPSNI (167 aa). The segment at 297–471 is disordered; it reads EDGVLTARPP…GEEDEDDWES (175 aa). Residues 304-336 show a composition bias toward pro residues; that stretch reads RPPPPPPPPPPPAPAVLMSVPPPPPPPQAPPGQ. Positions 353 to 471 are VCA; sequence QGAPKEVVDP…GEEDEDDWES (119 aa). Residues 365–387 enclose the WH2 domain; the sequence is GRATLLESIRQAGGIGKAKLRSV. Residues 386–402 are compositionally biased toward basic and acidic residues; it reads SVKERKLEKKKQKEQEQ. Residues 428–442 are compositionally biased toward gly residues; that stretch reads SGKGPGSGASEGPGG. Over residues 462–471 the composition is skewed to acidic residues; sequence GEEDEDDWES.

The protein belongs to the WASH1 family. In terms of assembly, component of the WASH core complex also described as WASH regulatory complex SHRC composed of WASHC1, WASHC2, WASHC3, WASHC4 and WASHC5. The WASH core complex associates with the F-actin-capping protein dimer (formed by CAPZA1, CAPZA2 or CAPZA3 and CAPZB); the assembly has been initially described as WASH complex. Interacts (via WHD1 region) with WASHC2; the interaction is direct. Interacts with alpha-tubulin. Interacts with BECN1; WASHC1 and AMBRA1 can competitively interact with BECN1. Interacts with BLOC1S2; may associate with the BLOC-1 complex. Interacts with tubulin gamma chain (TUBG1 or TUBG2). Interacts with TBC1D23.

The protein localises to the early endosome membrane. Its subcellular location is the recycling endosome membrane. It localises to the late endosome. The protein resides in the cytoplasmic vesicle. It is found in the autophagosome. The protein localises to the cytoplasm. Its subcellular location is the cytoskeleton. It localises to the microtubule organizing center. The protein resides in the centrosome. It is found in the centriole. Its function is as follows. Acts as a component of the WASH core complex that functions as a nucleation-promoting factor (NPF) at the surface of endosomes, where it recruits and activates the Arp2/3 complex to induce actin polymerization, playing a key role in the fission of tubules that serve as transport intermediates during endosome sorting. Involved in endocytic trafficking of EGF. Involved in transferrin receptor recycling. Regulates the trafficking of endosomal alpha5beta1 integrin to the plasma membrane and involved in invasive cell migration. In T-cells involved in endosome-to-membrane recycling of receptors including T-cell receptor (TCR), CD28 and ITGAL; proposed to be implicated in T-cell proliferation and effector function. In dendritic cells involved in endosome-to-membrane recycling of major histocompatibility complex (MHC) class II probably involving retromer and subsequently allowing antigen sampling, loading and presentation during T-cell activation. Involved in negative regulation of autophagy independently from its role in endosomal sorting by inhibiting BECN1 ubiquitination to inactivate PIK3C3/Vps34 activity. This chain is WASH complex subunit 1, found in Bos taurus (Bovine).